The chain runs to 320 residues: Beta-ketoacyl-[acyl-carrier-protein] synthase III (320 aa).

Residues C114 and H247 contribute to the active site. Residues 248–252 (QANRR) are ACP-binding. N277 is an active-site residue.

It belongs to the thiolase-like superfamily. FabH family. As to quaternary structure, homodimer.

It localises to the cytoplasm. It catalyses the reaction malonyl-[ACP] + acetyl-CoA + H(+) = 3-oxobutanoyl-[ACP] + CO2 + CoA. Its pathway is lipid metabolism; fatty acid biosynthesis. Catalyzes the condensation reaction of fatty acid synthesis by the addition to an acyl acceptor of two carbons from malonyl-ACP. Catalyzes the first condensation reaction which initiates fatty acid synthesis and may therefore play a role in governing the total rate of fatty acid production. Possesses both acetoacetyl-ACP synthase and acetyl transacylase activities. Its substrate specificity determines the biosynthesis of branched-chain and/or straight-chain of fatty acids. The polypeptide is Beta-ketoacyl-[acyl-carrier-protein] synthase III (Neisseria gonorrhoeae (strain ATCC 700825 / FA 1090)).